Reading from the N-terminus, the 302-residue chain is MKIVFMGTPEYATAILRALFENNFKISAVFTQPDKPVGRKQILTPPDVKKFLLESHADTPIFQPSNIKTPEIAKKICEFSPDFIVVAAYGQILPLEILEICPCINLHASILPKFRGASPIQSAILEGEKISGVTAMKMGAGLDDGDILGFSFCGIQKLDESEVFHKFGNVAAKLCIKILQNFDDIAPLKQKNVLSSKCKKIKKTDGLVKFSDSADEISAKFSAFKTWPGIFLENGTKLLEIRKFSDEKKEFGKISHITKDGFTLAVKDGEIEILKLQEPSKKAILARDFINGKRLKIGDRIS.

109–112 (SILP) contributes to the (6S)-5,6,7,8-tetrahydrofolate binding site.

This sequence belongs to the Fmt family.

It carries out the reaction L-methionyl-tRNA(fMet) + (6R)-10-formyltetrahydrofolate = N-formyl-L-methionyl-tRNA(fMet) + (6S)-5,6,7,8-tetrahydrofolate + H(+). In terms of biological role, attaches a formyl group to the free amino group of methionyl-tRNA(fMet). The formyl group appears to play a dual role in the initiator identity of N-formylmethionyl-tRNA by promoting its recognition by IF2 and preventing the misappropriation of this tRNA by the elongation apparatus. This Campylobacter hominis (strain ATCC BAA-381 / DSM 21671 / CCUG 45161 / LMG 19568 / NCTC 13146 / CH001A) protein is Methionyl-tRNA formyltransferase.